We begin with the raw amino-acid sequence, 555 residues long: Transcription factor kojR (555 aa).

The zn(2)-C6 fungal-type DNA-binding region spans 21–47; sequence CETCKLRKRKCDGHEPCTYCLRYEYQC. Residues 51 to 73 are disordered; that stretch reads PHPRRKPAASKSSARPSEEEDSP.

The protein localises to the nucleus. Functionally, transcription factor that regulates the gene cluster that mediates the biosynthesis of 5-hydroxy-2-hydroxymethyl-1,4-pyrone, also know as kojic acid, a by-product in the fermentation process of malting rice that acts as a chelation agent. Negatively regulates the expression of the kojic acid-related protein kap1. Improves the antioxidant capacity via the accumulation of kojic acid that is also a strong oxidant. This chain is Transcription factor kojR, found in Aspergillus oryzae (strain ATCC 42149 / RIB 40) (Yellow koji mold).